A 237-amino-acid chain; its full sequence is Demethylmenaquinone methyltransferase (237 aa).

Residues Thr-58, Asp-79, and 106 to 107 (NA) each bind S-adenosyl-L-methionine.

Belongs to the class I-like SAM-binding methyltransferase superfamily. MenG/UbiE family.

The enzyme catalyses a 2-demethylmenaquinol + S-adenosyl-L-methionine = a menaquinol + S-adenosyl-L-homocysteine + H(+). The protein operates within quinol/quinone metabolism; menaquinone biosynthesis; menaquinol from 1,4-dihydroxy-2-naphthoate: step 2/2. In terms of biological role, methyltransferase required for the conversion of demethylmenaquinol (DMKH2) to menaquinol (MKH2). This Listeria innocua serovar 6a (strain ATCC BAA-680 / CLIP 11262) protein is Demethylmenaquinone methyltransferase.